A 213-amino-acid polypeptide reads, in one-letter code: Cytochrome c biogenesis ATP-binding export protein CcmA (213 aa).

In terms of domain architecture, ABC transporter spans 11-213 (LTARNLECIR…TVTVHHLVLS (203 aa)). 43–50 (GPNGSGKT) contributes to the ATP binding site.

The protein belongs to the ABC transporter superfamily. CcmA exporter (TC 3.A.1.107) family. As to quaternary structure, the complex is composed of two ATP-binding proteins (CcmA) and two transmembrane proteins (CcmB).

Its subcellular location is the cell inner membrane. The enzyme catalyses heme b(in) + ATP + H2O = heme b(out) + ADP + phosphate + H(+). In terms of biological role, part of the ABC transporter complex CcmAB involved in the biogenesis of c-type cytochromes; once thought to export heme, this seems not to be the case, but its exact role is uncertain. Responsible for energy coupling to the transport system. The chain is Cytochrome c biogenesis ATP-binding export protein CcmA from Nitrosomonas europaea (strain ATCC 19718 / CIP 103999 / KCTC 2705 / NBRC 14298).